Here is a 367-residue protein sequence, read N- to C-terminus: MASSPVGVPSPQPSRANGNINLGPSANPNARPTDFDFLKVIGKGNYGKVLLAKRKSDGAFYAVKVLQKKSILKNKEQSHIMAERNVLLKNVRHPFLVGLRYSFQTPEKLYFVLDYVNGGELFFHLQREHRFLEPRARFYTAEVASAIGYLHSLNIIYRDLKPENILLDCQGHVVLTDFGLCKECVEPEETTSTFCGTPEYLAPEVLRKEPYDRAVDWWCLGAVLYEMLHGLPPFFNTDVAQMYENILHQPLQIPGGRTVAACDLLQGLLHKDQRQRLGSKEDFLDIKNHMFFSPINWDDLYHKRLTPPFNPNVEGPADLKHFDPEFTQEAVSKSIGCTPDTMSSSSGASSAFLGFSYAQDDDDILDS.

Residues 1 to 28 are disordered; it reads MASSPVGVPSPQPSRANGNINLGPSANP. Residue Ser10 is modified to Phosphoserine. Over residues 15–28 the composition is skewed to polar residues; sequence RANGNINLGPSANP. The Protein kinase domain maps to 35–292; sequence FDFLKVIGKG…FLDIKNHMFF (258 aa). Residues 41–49 and Lys64 each bind ATP; that span reads IGKGNYGKV. The short motif at 68–77 is the Nuclear localization signal element; it reads KKSILKNKEQ. Catalysis depends on Asp159, which acts as the Proton acceptor. Thr193 carries the post-translational modification Phosphothreonine; by PDPK1. An AGC-kinase C-terminal domain is found at 293 to 367; the sequence is SPINWDDLYH…AQDDDDILDS (75 aa). Phosphoserine occurs at positions 334 and 356. At Tyr357 the chain carries Phosphotyrosine.

It belongs to the protein kinase superfamily. AGC Ser/Thr protein kinase family. Post-translationally, activated by phosphorylation on Ser-356 by an unknown kinase (may be mTORC2 but not confirmed), transforming it into a substrate for PDPK1 which then phosphorylates it on Thr-193. In terms of tissue distribution, expressed in the proximal tubule and thick ascending limb of the loop of Henle (TALH).

It localises to the cytoplasm. It is found in the nucleus. The enzyme catalyses L-seryl-[protein] + ATP = O-phospho-L-seryl-[protein] + ADP + H(+). The catalysed reaction is L-threonyl-[protein] + ATP = O-phospho-L-threonyl-[protein] + ADP + H(+). With respect to regulation, two specific sites, one in the kinase domain (Thr-193) and the other in the C-terminal regulatory region (Ser-356), need to be phosphorylated for its full activation. Its function is as follows. Serine/threonine-protein kinase which is involved in the regulation of a wide variety of ion channels, membrane transporters, cell growth, survival and proliferation. Up-regulates Na(+) channels: SCNN1A/ENAC, K(+) channels: KCNA3/Kv1.3, KCNE1 and KCNQ1, amino acid transporter: SLC6A19, glutamate transporter: SLC1A6/EAAT4, glutamate receptors: GRIA1/GLUR1 and GRIK2/GLUR6, Na(+)/H(+) exchanger: SLC9A3/NHE3, and the Na(+)/K(+) ATPase. This Rattus norvegicus (Rat) protein is Serine/threonine-protein kinase Sgk2 (Sgk2).